Here is a 266-residue protein sequence, read N- to C-terminus: 4-hydroxy-tetrahydrodipicolinate reductase (266 aa).

10–15 lines the NAD(+) pocket; it reads GPRGRM. NADP(+) is bound at residue lysine 38. NAD(+)-binding positions include 99-101 and 125-128; these read GTT and APNF. Residue histidine 155 is the Proton donor/acceptor of the active site. Histidine 156 contacts (S)-2,3,4,5-tetrahydrodipicolinate. Lysine 159 functions as the Proton donor in the catalytic mechanism. Position 165–166 (165–166) interacts with (S)-2,3,4,5-tetrahydrodipicolinate; the sequence is GT.

Belongs to the DapB family.

Its subcellular location is the cytoplasm. The catalysed reaction is (S)-2,3,4,5-tetrahydrodipicolinate + NAD(+) + H2O = (2S,4S)-4-hydroxy-2,3,4,5-tetrahydrodipicolinate + NADH + H(+). It carries out the reaction (S)-2,3,4,5-tetrahydrodipicolinate + NADP(+) + H2O = (2S,4S)-4-hydroxy-2,3,4,5-tetrahydrodipicolinate + NADPH + H(+). It functions in the pathway amino-acid biosynthesis; L-lysine biosynthesis via DAP pathway; (S)-tetrahydrodipicolinate from L-aspartate: step 4/4. Functionally, catalyzes the conversion of 4-hydroxy-tetrahydrodipicolinate (HTPA) to tetrahydrodipicolinate. This is 4-hydroxy-tetrahydrodipicolinate reductase from Bacillus cereus (strain ATCC 10987 / NRS 248).